Reading from the N-terminus, the 504-residue chain is ATP synthase subunit alpha (504 aa).

Residue 169–176 (GDRQTGKT) coordinates ATP.

This sequence belongs to the ATPase alpha/beta chains family. In terms of assembly, F-type ATPases have 2 components, CF(1) - the catalytic core - and CF(0) - the membrane proton channel. CF(1) has five subunits: alpha(3), beta(3), gamma(1), delta(1), epsilon(1). CF(0) has three main subunits: a(1), b(2) and c(9-12). The alpha and beta chains form an alternating ring which encloses part of the gamma chain. CF(1) is attached to CF(0) by a central stalk formed by the gamma and epsilon chains, while a peripheral stalk is formed by the delta and b chains.

It is found in the cell membrane. It catalyses the reaction ATP + H2O + 4 H(+)(in) = ADP + phosphate + 5 H(+)(out). Its function is as follows. Produces ATP from ADP in the presence of a proton gradient across the membrane. The alpha chain is a regulatory subunit. The polypeptide is ATP synthase subunit alpha (Clostridium botulinum (strain Alaska E43 / Type E3)).